The sequence spans 138 residues: Basic phospholipase A2 chain HDP-2P (138 aa).

An N-terminal signal peptide occupies residues 1 to 16 (MRILWIVAVCLIGVEG). Disulfide bonds link C42–C131, C44–C60, C59–C111, C65–C138, C66–C104, C73–C97, and C91–C102. Ca(2+) contacts are provided by Y43, G45, and G47. The active site involves H63. D64 lines the Ca(2+) pocket. D105 is a catalytic residue.

As to quaternary structure, heterodimer of an acidic and a basic chain; non-covalently linked. The toxic basic protein has phospholipase A2 activity (chain HDP-2P) and the non-toxic acidic protein functions as its inhibitor (chain HPD-1I (AC A4VBF0)). Ca(2+) serves as cofactor. Expressed by the venom gland.

It is found in the secreted. The catalysed reaction is a 1,2-diacyl-sn-glycero-3-phosphocholine + H2O = a 1-acyl-sn-glycero-3-phosphocholine + a fatty acid + H(+). Its activity is regulated as follows. Enzymatic activity and neurotoxicity are inhibited by Triton X-100. Triton X-100 has been determined to be located in the center of the hydrophobic channel of the enzyme. Monomer: snake venom phospholipase A2 (PLA2) that affects neuromuscular transmission presynaptically. It has catalytic activity, anticoagulant activity and weakly inhibits ADP-induced platelet aggregation. PLA2 catalyzes the calcium-dependent hydrolysis of the 2-acyl groups in 3-sn-phosphoglycerides. Functionally, heterodimer: shows the same activities as the monomer, but with a lower potency. The protein is Basic phospholipase A2 chain HDP-2P of Vipera nikolskii (Nikolsky's adder).